The sequence spans 348 residues: (+)-germacrene D synthase (348 aa).

Residues Asp97, Asp101, Asn242, and Ser246 each coordinate Mg(2+). The short motif at 97-101 (DDILD) is the DDXXD motif element.

Belongs to the terpene synthase family. Mg(2+) serves as cofactor.

It carries out the reaction (2E,6E)-farnesyl diphosphate = (+)-germacrene D + diphosphate. Its pathway is secondary metabolite biosynthesis; terpenoid biosynthesis. In terms of biological role, sesquiterpene synthase converting farnesyl diphosphate to eight sesquiterpenes, with (+)-germacrene D and an unidentified oxygenated sesquiterpene as the major products. Has no diterpene synthase activity. This is (+)-germacrene D synthase from Selaginella moellendorffii (Spikemoss).